Here is a 138-residue protein sequence, read N- to C-terminus: uncharacterized protein (138 aa).

The disordered stretch occupies residues 74–96 (RRRSPSLPARRPPTPREDALEDY). Residues 87–96 (TPREDALEDY) are compositionally biased toward basic and acidic residues.

This is an uncharacterized protein from Orgyia pseudotsugata (Douglas-fir tussock moth).